The primary structure comprises 2200 residues: Bromodomain and WD repeat-containing DDB_G0285837 (2200 aa).

Disordered stretches follow at residues 137-178 (GFND…SNTN), 194-245 (VTPT…TTPP), and 259-288 (DIQQ…NNNN). 3 stretches are compositionally biased toward low complexity: residues 161–176 (NNNN…SNSN), 203–242 (NTTN…TTLT), and 259–273 (DIQQ…QQQQ). WD repeat units follow at residues 352–391 (GHKA…LIAT), 394–433 (GHLG…YDSI), 442–483 (SVNN…HVIS), 548–586 (GKTN…PKLV), 591–630 (GHPT…KWDH), 653–691 (RSKA…FHLE), 694–736 (EHTS…KKFV), and 741–780 (GFQC…DINN). 2 stretches are compositionally biased toward acidic residues: residues 918–933 (DDEI…EDFN) and 955–968 (QDDD…EDYD). Disordered stretches follow at residues 918-1180 (DDEI…NHLT), 1262-1297 (NNNN…DDDD), 1461-1538 (ENNQ…NNNN), and 1662-1703 (NFNS…NNNN). Positions 974–1000 (MSTRKKSKIKADKRKKRLLKQSKKFTR) are enriched in basic residues. Residues 1052-1074 (GEIEMDDDDQYLNDNILDSDDND) are compositionally biased toward acidic residues. Over residues 1109–1132 (SSDNSSENDSSANGSDSDYSGSKS) the composition is skewed to low complexity. A compositionally biased stretch (basic residues) spans 1133–1164 (NKNKRGDKSKRNKKGKKNVKNKKVQKRGRKKS). Low complexity-rich tracts occupy residues 1262-1292 (NNNN…QQIN) and 1461-1525 (ENNQ…NSLN). A Bromo domain is found at 1722–1823 (EKIENLKKEM…HRISDILKEA (102 aa)). Positions 1850-2200 (DKDDSQLDDE…RGRGRPPKSN (351 aa)) are disordered. Positions 1878 to 1888 (LANNNHGNNKS) are enriched in low complexity. The span at 1910–1920 (TGKNITRSLLS) shows a compositional bias: polar residues. Positions 1945 to 1958 (TTTTTTTTTTTSST) are enriched in low complexity. Composition is skewed to acidic residues over residues 2016–2028 (DYND…DNDG), 2057–2073 (EDED…EEDY), and 2104–2113 (SEEEEDEDQS). Low complexity predominate over residues 2114 to 2124 (DVNSNNNSDNE). A compositionally biased stretch (acidic residues) spans 2125 to 2138 (SGGEDGYSGEDGSE). Low complexity predominate over residues 2170–2185 (SFKNNNNNNNINNNVN). Residues 2190–2200 (KRGRGRPPKSN) show a composition bias toward basic residues.

The polypeptide is Bromodomain and WD repeat-containing DDB_G0285837 (Dictyostelium discoideum (Social amoeba)).